Consider the following 417-residue polypeptide: Serine hydroxymethyltransferase (417 aa).

Residues Leu-121 and Gly-125–Leu-127 each bind (6S)-5,6,7,8-tetrahydrofolate. N6-(pyridoxal phosphate)lysine is present on Lys-229. Ser-355 to Phe-357 lines the (6S)-5,6,7,8-tetrahydrofolate pocket.

Belongs to the SHMT family. As to quaternary structure, homodimer. Pyridoxal 5'-phosphate is required as a cofactor.

It localises to the cytoplasm. It carries out the reaction (6R)-5,10-methylene-5,6,7,8-tetrahydrofolate + glycine + H2O = (6S)-5,6,7,8-tetrahydrofolate + L-serine. It functions in the pathway one-carbon metabolism; tetrahydrofolate interconversion. The protein operates within amino-acid biosynthesis; glycine biosynthesis; glycine from L-serine: step 1/1. Catalyzes the reversible interconversion of serine and glycine with tetrahydrofolate (THF) serving as the one-carbon carrier. This reaction serves as the major source of one-carbon groups required for the biosynthesis of purines, thymidylate, methionine, and other important biomolecules. Also exhibits THF-independent aldolase activity toward beta-hydroxyamino acids, producing glycine and aldehydes, via a retro-aldol mechanism. This is Serine hydroxymethyltransferase from Buchnera aphidicola subsp. Baizongia pistaciae (strain Bp).